The following is a 126-amino-acid chain: Fluoride-specific ion channel FluC (126 aa).

4 helical membrane passes run 9–29, 35–55, 63–83, and 94–114; these read LAVFAGGAIGSVLRELLGFQL, LTATFGINIAACFLLGWLYAI, LLHLGAVGFCGGLSTFSSFVL, and WSIGLTAMTLEIAAGLAAAIL. Na(+) contacts are provided by Gly-73 and Ser-76.

The protein belongs to the fluoride channel Fluc/FEX (TC 1.A.43) family.

It is found in the cell inner membrane. The enzyme catalyses fluoride(in) = fluoride(out). Its activity is regulated as follows. Na(+) is not transported, but it plays an essential structural role and its presence is essential for fluoride channel function. Functionally, fluoride-specific ion channel. Important for reducing fluoride concentration in the cell, thus reducing its toxicity. The chain is Fluoride-specific ion channel FluC from Ruegeria pomeroyi (strain ATCC 700808 / DSM 15171 / DSS-3) (Silicibacter pomeroyi).